A 793-amino-acid chain; its full sequence is Probable phosphoketolase (793 aa).

Belongs to the XFP family. The cofactor is thiamine diphosphate.

The chain is Probable phosphoketolase from Rhodopirellula baltica (strain DSM 10527 / NCIMB 13988 / SH1).